A 156-amino-acid chain; its full sequence is Small ribosomal subunit protein uS7 (156 aa).

This sequence belongs to the universal ribosomal protein uS7 family. As to quaternary structure, part of the 30S ribosomal subunit. Contacts proteins S9 and S11.

One of the primary rRNA binding proteins, it binds directly to 16S rRNA where it nucleates assembly of the head domain of the 30S subunit. Is located at the subunit interface close to the decoding center, probably blocks exit of the E-site tRNA. The polypeptide is Small ribosomal subunit protein uS7 (Citrifermentans bemidjiense (strain ATCC BAA-1014 / DSM 16622 / JCM 12645 / Bem) (Geobacter bemidjiensis)).